The primary structure comprises 316 residues: Acetyl-coenzyme A carboxylase carboxyl transferase subunit alpha (316 aa).

The 255-residue stretch at 36–290 folds into the CoA carboxyltransferase C-terminal domain; that stretch reads KLEQKLDSLK…KQFLVEQLHI (255 aa).

The protein belongs to the AccA family. Acetyl-CoA carboxylase is a heterohexamer composed of biotin carboxyl carrier protein (AccB), biotin carboxylase (AccC) and two subunits each of ACCase subunit alpha (AccA) and ACCase subunit beta (AccD).

It localises to the cytoplasm. The catalysed reaction is N(6)-carboxybiotinyl-L-lysyl-[protein] + acetyl-CoA = N(6)-biotinyl-L-lysyl-[protein] + malonyl-CoA. The protein operates within lipid metabolism; malonyl-CoA biosynthesis; malonyl-CoA from acetyl-CoA: step 1/1. Functionally, component of the acetyl coenzyme A carboxylase (ACC) complex. First, biotin carboxylase catalyzes the carboxylation of biotin on its carrier protein (BCCP) and then the CO(2) group is transferred by the carboxyltransferase to acetyl-CoA to form malonyl-CoA. In Protochlamydia amoebophila (strain UWE25), this protein is Acetyl-coenzyme A carboxylase carboxyl transferase subunit alpha.